The following is a 293-amino-acid chain: Ribosomal protein L11 methyltransferase (293 aa).

Residues Thr144, Gly165, Asp187, and Asn228 each contribute to the S-adenosyl-L-methionine site.

It belongs to the methyltransferase superfamily. PrmA family.

The protein localises to the cytoplasm. It catalyses the reaction L-lysyl-[protein] + 3 S-adenosyl-L-methionine = N(6),N(6),N(6)-trimethyl-L-lysyl-[protein] + 3 S-adenosyl-L-homocysteine + 3 H(+). In terms of biological role, methylates ribosomal protein L11. This is Ribosomal protein L11 methyltransferase from Methylococcus capsulatus (strain ATCC 33009 / NCIMB 11132 / Bath).